The primary structure comprises 207 residues: Large ribosomal subunit protein uL4 (207 aa).

Residues 47 to 78 (GTHKVKNRSEVRGGGRKPWRQKGTGRARQGSI) are disordered. Over residues 60–71 (GGRKPWRQKGTG) the composition is skewed to basic residues.

This sequence belongs to the universal ribosomal protein uL4 family. Part of the 50S ribosomal subunit.

Its function is as follows. One of the primary rRNA binding proteins, this protein initially binds near the 5'-end of the 23S rRNA. It is important during the early stages of 50S assembly. It makes multiple contacts with different domains of the 23S rRNA in the assembled 50S subunit and ribosome. Forms part of the polypeptide exit tunnel. This is Large ribosomal subunit protein uL4 from Listeria innocua serovar 6a (strain ATCC BAA-680 / CLIP 11262).